The primary structure comprises 451 residues: Phosphoglucosamine mutase (451 aa).

The active-site Phosphoserine intermediate is S103. Residues S103, D243, D245, and D247 each coordinate Mg(2+). S103 is subject to Phosphoserine.

The protein belongs to the phosphohexose mutase family. It depends on Mg(2+) as a cofactor. In terms of processing, activated by phosphorylation.

The enzyme catalyses alpha-D-glucosamine 1-phosphate = D-glucosamine 6-phosphate. Its function is as follows. Catalyzes the conversion of glucosamine-6-phosphate to glucosamine-1-phosphate. This chain is Phosphoglucosamine mutase, found in Limosilactobacillus reuteri subsp. reuteri (strain JCM 1112) (Lactobacillus reuteri).